The sequence spans 193 residues: dCTP deaminase (193 aa).

DCTP-binding positions include 110–115 (RSSLAR), D128, 136–138 (VLE), Y171, K178, and Q182. E138 functions as the Proton donor/acceptor in the catalytic mechanism. The segment at 170–193 (PYNSRQDAKYRGQQGAVASRIDKD) is disordered.

Belongs to the dCTP deaminase family. In terms of assembly, homotrimer.

It carries out the reaction dCTP + H2O + H(+) = dUTP + NH4(+). It participates in pyrimidine metabolism; dUMP biosynthesis; dUMP from dCTP (dUTP route): step 1/2. In terms of biological role, catalyzes the deamination of dCTP to dUTP. The chain is dCTP deaminase from Yersinia enterocolitica serotype O:8 / biotype 1B (strain NCTC 13174 / 8081).